A 239-amino-acid polypeptide reads, in one-letter code: uncharacterized protein (239 aa).

The disordered stretch occupies residues 104–127; sequence LPATSQSSQPKSTNSSTESSSIGQ. Over residues 107 to 127 the composition is skewed to low complexity; it reads TSQSSQPKSTNSSTESSSIGQ. Residues 134–202 are a coiled coil; sequence ENEINLNKNK…HFIQNNQESF (69 aa). A helical transmembrane segment spans residues 211-231; that stretch reads VKIGSAFIIYIFYNVLFFIIV.

Its subcellular location is the membrane. This is an uncharacterized protein from Dictyostelium discoideum (Social amoeba).